Reading from the N-terminus, the 493-residue chain is Ketol-acid reductoisomerase (NADP(+)) (493 aa).

Residues Leu-14–Ser-208 enclose the KARI N-terminal Rossmann domain. Residues Cys-45 to Gln-48, Arg-68, Arg-76, Ser-78, and Asp-108 to Gln-110 each bind NADP(+). His-132 is a catalytic residue. Gly-158 is a binding site for NADP(+). KARI C-terminal knotted domains follow at residues Ser-209–Ala-345 and Asp-346–Met-486. The Mg(2+) site is built by Asp-217, Glu-221, Glu-390, and Glu-394. Ser-415 contributes to the substrate binding site.

This sequence belongs to the ketol-acid reductoisomerase family. Requires Mg(2+) as cofactor.

The catalysed reaction is (2R)-2,3-dihydroxy-3-methylbutanoate + NADP(+) = (2S)-2-acetolactate + NADPH + H(+). It carries out the reaction (2R,3R)-2,3-dihydroxy-3-methylpentanoate + NADP(+) = (S)-2-ethyl-2-hydroxy-3-oxobutanoate + NADPH + H(+). The protein operates within amino-acid biosynthesis; L-isoleucine biosynthesis; L-isoleucine from 2-oxobutanoate: step 2/4. Its pathway is amino-acid biosynthesis; L-valine biosynthesis; L-valine from pyruvate: step 2/4. Its function is as follows. Involved in the biosynthesis of branched-chain amino acids (BCAA). Catalyzes an alkyl-migration followed by a ketol-acid reduction of (S)-2-acetolactate (S2AL) to yield (R)-2,3-dihydroxy-isovalerate. In the isomerase reaction, S2AL is rearranged via a Mg-dependent methyl migration to produce 3-hydroxy-3-methyl-2-ketobutyrate (HMKB). In the reductase reaction, this 2-ketoacid undergoes a metal-dependent reduction by NADPH to yield (R)-2,3-dihydroxy-isovalerate. The polypeptide is Ketol-acid reductoisomerase (NADP(+)) (Actinobacillus succinogenes (strain ATCC 55618 / DSM 22257 / CCUG 43843 / 130Z)).